The primary structure comprises 276 residues: Secretagogin (276 aa).

6 consecutive EF-hand domains span residues 12 to 47, 58 to 93, 105 to 140, 149 to 184, 197 to 232, and 240 to 276; these read LDAA…MLMK, NLHK…EDEN, DSSV…LFLH, KLEE…QENF, ERKR…MMEL, and VDLD…KINP. Ca(2+) is bound by residues aspartate 25, aspartate 27, tyrosine 31, glutamate 36, aspartate 71, serine 73, aspartate 75, arginine 77, glutamate 82, aspartate 118, aspartate 120, serine 122, glutamate 129, aspartate 162, asparagine 164, aspartate 166, arginine 168, aspartate 173, aspartate 210, serine 212, threonine 214, glutamate 221, aspartate 254, asparagine 256, aspartate 258, lysine 260, and glutamate 265.

Expressed at high levels in the pancreatic islets of Langerhans and to a much lesser extent in the gastrointestinal tract (stomach, small intestine and colon), the adrenal medulla and cortex and the thyroid C-cells. In the brain, the expression is restricted to distinct subtypes of neurons with highest expression in the molecular layer of the cerebellum (stellate and basket cells), in the anterior part of the pituitary gland, in the thalamus, in the hypothalamus and in a subgroup of neocortical neurons.

It is found in the cytoplasm. The protein localises to the secreted. It localises to the cytoplasmic vesicle. The protein resides in the secretory vesicle membrane. This is Secretagogin (SCGN) from Homo sapiens (Human).